A 293-amino-acid chain; its full sequence is Probable porphobilinogen deaminase (293 aa).

S-(dipyrrolylmethanemethyl)cysteine is present on C233.

The protein belongs to the HMBS family. It depends on dipyrromethane as a cofactor.

The enzyme catalyses 4 porphobilinogen + H2O = hydroxymethylbilane + 4 NH4(+). Its pathway is porphyrin-containing compound metabolism; protoporphyrin-IX biosynthesis; coproporphyrinogen-III from 5-aminolevulinate: step 2/4. Functionally, tetrapolymerization of the monopyrrole PBG into the hydroxymethylbilane pre-uroporphyrinogen in several discrete steps. The chain is Probable porphobilinogen deaminase from Saccharolobus islandicus (strain Y.G.57.14 / Yellowstone #1) (Sulfolobus islandicus).